The chain runs to 307 residues: UDP-3-O-acyl-N-acetylglucosamine deacetylase (307 aa).

Residues H80, H239, and D243 each coordinate Zn(2+). H266 (proton donor) is an active-site residue.

This sequence belongs to the LpxC family. Zn(2+) is required as a cofactor.

It catalyses the reaction a UDP-3-O-[(3R)-3-hydroxyacyl]-N-acetyl-alpha-D-glucosamine + H2O = a UDP-3-O-[(3R)-3-hydroxyacyl]-alpha-D-glucosamine + acetate. It participates in glycolipid biosynthesis; lipid IV(A) biosynthesis; lipid IV(A) from (3R)-3-hydroxytetradecanoyl-[acyl-carrier-protein] and UDP-N-acetyl-alpha-D-glucosamine: step 2/6. In terms of biological role, catalyzes the hydrolysis of UDP-3-O-myristoyl-N-acetylglucosamine to form UDP-3-O-myristoylglucosamine and acetate, the committed step in lipid A biosynthesis. This is UDP-3-O-acyl-N-acetylglucosamine deacetylase from Neisseria meningitidis serogroup A / serotype 4A (strain DSM 15465 / Z2491).